A 161-amino-acid polypeptide reads, in one-letter code: Protein-export protein SecB (161 aa).

The protein belongs to the SecB family. Homotetramer, a dimer of dimers. One homotetramer interacts with 1 SecA dimer.

Its subcellular location is the cytoplasm. One of the proteins required for the normal export of preproteins out of the cell cytoplasm. It is a molecular chaperone that binds to a subset of precursor proteins, maintaining them in a translocation-competent state. It also specifically binds to its receptor SecA. The polypeptide is Protein-export protein SecB (Coxiella burnetii (strain CbuG_Q212) (Coxiella burnetii (strain Q212))).